The chain runs to 320 residues: o-succinylbenzoate synthase (320 aa).

Residue Lys-133 is the Proton donor of the active site. 3 residues coordinate Mg(2+): Asp-161, Glu-190, and Asp-213. Lys-235 (proton acceptor) is an active-site residue.

Belongs to the mandelate racemase/muconate lactonizing enzyme family. MenC type 1 subfamily. The cofactor is a divalent metal cation.

It carries out the reaction (1R,6R)-6-hydroxy-2-succinyl-cyclohexa-2,4-diene-1-carboxylate = 2-succinylbenzoate + H2O. It participates in quinol/quinone metabolism; 1,4-dihydroxy-2-naphthoate biosynthesis; 1,4-dihydroxy-2-naphthoate from chorismate: step 4/7. It functions in the pathway quinol/quinone metabolism; menaquinone biosynthesis. Functionally, converts 2-succinyl-6-hydroxy-2,4-cyclohexadiene-1-carboxylate (SHCHC) to 2-succinylbenzoate (OSB). This Salmonella agona (strain SL483) protein is o-succinylbenzoate synthase.